Reading from the N-terminus, the 418-residue chain is Gamma-glutamyl phosphate reductase (418 aa).

This sequence belongs to the gamma-glutamyl phosphate reductase family.

The protein localises to the cytoplasm. It catalyses the reaction L-glutamate 5-semialdehyde + phosphate + NADP(+) = L-glutamyl 5-phosphate + NADPH + H(+). It participates in amino-acid biosynthesis; L-proline biosynthesis; L-glutamate 5-semialdehyde from L-glutamate: step 2/2. In terms of biological role, catalyzes the NADPH-dependent reduction of L-glutamate 5-phosphate into L-glutamate 5-semialdehyde and phosphate. The product spontaneously undergoes cyclization to form 1-pyrroline-5-carboxylate. This is Gamma-glutamyl phosphate reductase from Desulforapulum autotrophicum (strain ATCC 43914 / DSM 3382 / VKM B-1955 / HRM2) (Desulfobacterium autotrophicum).